Here is a 264-residue protein sequence, read N- to C-terminus: Thymidylate synthase (264 aa).

Arg-21 serves as a coordination point for dUMP. His-51 contributes to the (6R)-5,10-methylene-5,6,7,8-tetrahydrofolate binding site. A dUMP-binding site is contributed by 126-127 (RR). The active-site Nucleophile is Cys-146. Residues 166 to 169 (RSAD), Asn-177, and 207 to 209 (HIY) contribute to the dUMP site. Residue Asp-169 participates in (6R)-5,10-methylene-5,6,7,8-tetrahydrofolate binding. A (6R)-5,10-methylene-5,6,7,8-tetrahydrofolate-binding site is contributed by Ser-263.

Belongs to the thymidylate synthase family. Bacterial-type ThyA subfamily. Homodimer.

Its subcellular location is the cytoplasm. The catalysed reaction is dUMP + (6R)-5,10-methylene-5,6,7,8-tetrahydrofolate = 7,8-dihydrofolate + dTMP. It functions in the pathway pyrimidine metabolism; dTTP biosynthesis. In terms of biological role, catalyzes the reductive methylation of 2'-deoxyuridine-5'-monophosphate (dUMP) to 2'-deoxythymidine-5'-monophosphate (dTMP) while utilizing 5,10-methylenetetrahydrofolate (mTHF) as the methyl donor and reductant in the reaction, yielding dihydrofolate (DHF) as a by-product. This enzymatic reaction provides an intracellular de novo source of dTMP, an essential precursor for DNA biosynthesis. The chain is Thymidylate synthase from Halalkalibacterium halodurans (strain ATCC BAA-125 / DSM 18197 / FERM 7344 / JCM 9153 / C-125) (Bacillus halodurans).